The chain runs to 429 residues: Adenylosuccinate synthetase (429 aa).

Residues 12-18 (GDEGKGK) and 40-42 (GHT) each bind GTP. Catalysis depends on aspartate 13, which acts as the Proton acceptor. Mg(2+) contacts are provided by aspartate 13 and glycine 40. IMP is bound by residues 13 to 16 (DEGK), 38 to 41 (NAGH), threonine 128, arginine 142, glutamine 223, threonine 238, and arginine 302. Residue histidine 41 is the Proton donor of the active site. Position 298–304 (298–304 (VNTGRPR)) interacts with substrate. GTP is bound by residues arginine 304, 330-332 (KLD), and 412-414 (GVG).

The protein belongs to the adenylosuccinate synthetase family. Homodimer. It depends on Mg(2+) as a cofactor.

The protein resides in the cytoplasm. The enzyme catalyses IMP + L-aspartate + GTP = N(6)-(1,2-dicarboxyethyl)-AMP + GDP + phosphate + 2 H(+). It functions in the pathway purine metabolism; AMP biosynthesis via de novo pathway; AMP from IMP: step 1/2. Functionally, plays an important role in the de novo pathway of purine nucleotide biosynthesis. Catalyzes the first committed step in the biosynthesis of AMP from IMP. The sequence is that of Adenylosuccinate synthetase from Pseudarthrobacter chlorophenolicus (strain ATCC 700700 / DSM 12829 / CIP 107037 / JCM 12360 / KCTC 9906 / NCIMB 13794 / A6) (Arthrobacter chlorophenolicus).